Here is a 353-residue protein sequence, read N- to C-terminus: Uroporphyrinogen decarboxylase (353 aa).

Substrate is bound by residues 35–39 (RQAGR), Phe-54, Asp-84, Tyr-160, Ser-215, and His-329.

Belongs to the uroporphyrinogen decarboxylase family. In terms of assembly, homodimer.

It is found in the cytoplasm. It carries out the reaction uroporphyrinogen III + 4 H(+) = coproporphyrinogen III + 4 CO2. It participates in porphyrin-containing compound metabolism; protoporphyrin-IX biosynthesis; coproporphyrinogen-III from 5-aminolevulinate: step 4/4. In terms of biological role, catalyzes the decarboxylation of four acetate groups of uroporphyrinogen-III to yield coproporphyrinogen-III. This Staphylococcus epidermidis (strain ATCC 12228 / FDA PCI 1200) protein is Uroporphyrinogen decarboxylase.